Reading from the N-terminus, the 598-residue chain is Aspartate--tRNA ligase (598 aa).

An L-aspartate-binding site is contributed by Glu-182. The segment at 206–209 is aspartate; it reads QLFK. An L-aspartate-binding site is contributed by Arg-228. Residues 228–230 and Gln-237 each bind ATP; that span reads RDE. Residue His-456 participates in L-aspartate binding. Glu-490 is a binding site for ATP. Arg-497 contacts L-aspartate. Position 542 to 545 (542 to 545) interacts with ATP; the sequence is GVDR.

Belongs to the class-II aminoacyl-tRNA synthetase family. Type 1 subfamily. In terms of assembly, homodimer.

Its subcellular location is the cytoplasm. The enzyme catalyses tRNA(Asp) + L-aspartate + ATP = L-aspartyl-tRNA(Asp) + AMP + diphosphate. Functionally, catalyzes the attachment of L-aspartate to tRNA(Asp) in a two-step reaction: L-aspartate is first activated by ATP to form Asp-AMP and then transferred to the acceptor end of tRNA(Asp). The protein is Aspartate--tRNA ligase of Agathobacter rectalis (strain ATCC 33656 / DSM 3377 / JCM 17463 / KCTC 5835 / VPI 0990) (Eubacterium rectale).